A 226-amino-acid chain; its full sequence is Leucyl/phenylalanyl-tRNA--protein transferase (226 aa).

The protein belongs to the L/F-transferase family.

It localises to the cytoplasm. The catalysed reaction is N-terminal L-lysyl-[protein] + L-leucyl-tRNA(Leu) = N-terminal L-leucyl-L-lysyl-[protein] + tRNA(Leu) + H(+). It catalyses the reaction N-terminal L-arginyl-[protein] + L-leucyl-tRNA(Leu) = N-terminal L-leucyl-L-arginyl-[protein] + tRNA(Leu) + H(+). The enzyme catalyses L-phenylalanyl-tRNA(Phe) + an N-terminal L-alpha-aminoacyl-[protein] = an N-terminal L-phenylalanyl-L-alpha-aminoacyl-[protein] + tRNA(Phe). Functions in the N-end rule pathway of protein degradation where it conjugates Leu, Phe and, less efficiently, Met from aminoacyl-tRNAs to the N-termini of proteins containing an N-terminal arginine or lysine. This is Leucyl/phenylalanyl-tRNA--protein transferase from Pseudomonas putida (strain W619).